Consider the following 227-residue polypeptide: Cytochrome c oxidase subunit 2 (227 aa).

The Mitochondrial intermembrane segment spans residues 1–14 (MAHAAQVGLQDATS). The helical transmembrane segment at 15–45 (PIMEELIIFHDHALMIIFLICFLVLYALFLT) threads the bilayer. The Mitochondrial matrix portion of the chain corresponds to 46 to 59 (LTTKLTSTNISDAQ). A helical membrane pass occupies residues 60–87 (EMETVWTILPAIILVLIALPSLRILYMT). The Mitochondrial intermembrane portion of the chain corresponds to 88 to 227 (DEINDPSFTI…IFEMGPVFTL (140 aa)). Residues histidine 161, cysteine 196, glutamate 198, cysteine 200, histidine 204, and methionine 207 each coordinate Cu cation. Glutamate 198 contacts Mg(2+).

Belongs to the cytochrome c oxidase subunit 2 family. In terms of assembly, component of the cytochrome c oxidase (complex IV, CIV), a multisubunit enzyme composed of 14 subunits. The complex is composed of a catalytic core of 3 subunits MT-CO1, MT-CO2 and MT-CO3, encoded in the mitochondrial DNA, and 11 supernumerary subunits COX4I, COX5A, COX5B, COX6A, COX6B, COX6C, COX7A, COX7B, COX7C, COX8 and NDUFA4, which are encoded in the nuclear genome. The complex exists as a monomer or a dimer and forms supercomplexes (SCs) in the inner mitochondrial membrane with NADH-ubiquinone oxidoreductase (complex I, CI) and ubiquinol-cytochrome c oxidoreductase (cytochrome b-c1 complex, complex III, CIII), resulting in different assemblies (supercomplex SCI(1)III(2)IV(1) and megacomplex MCI(2)III(2)IV(2)). Found in a complex with TMEM177, COA6, COX18, COX20, SCO1 and SCO2. Interacts with TMEM177 in a COX20-dependent manner. Interacts with COX20. Interacts with COX16. Cu cation serves as cofactor.

It is found in the mitochondrion inner membrane. It catalyses the reaction 4 Fe(II)-[cytochrome c] + O2 + 8 H(+)(in) = 4 Fe(III)-[cytochrome c] + 2 H2O + 4 H(+)(out). Functionally, component of the cytochrome c oxidase, the last enzyme in the mitochondrial electron transport chain which drives oxidative phosphorylation. The respiratory chain contains 3 multisubunit complexes succinate dehydrogenase (complex II, CII), ubiquinol-cytochrome c oxidoreductase (cytochrome b-c1 complex, complex III, CIII) and cytochrome c oxidase (complex IV, CIV), that cooperate to transfer electrons derived from NADH and succinate to molecular oxygen, creating an electrochemical gradient over the inner membrane that drives transmembrane transport and the ATP synthase. Cytochrome c oxidase is the component of the respiratory chain that catalyzes the reduction of oxygen to water. Electrons originating from reduced cytochrome c in the intermembrane space (IMS) are transferred via the dinuclear copper A center (CU(A)) of subunit 2 and heme A of subunit 1 to the active site in subunit 1, a binuclear center (BNC) formed by heme A3 and copper B (CU(B)). The BNC reduces molecular oxygen to 2 water molecules using 4 electrons from cytochrome c in the IMS and 4 protons from the mitochondrial matrix. The sequence is that of Cytochrome c oxidase subunit 2 (MT-CO2) from Gorilla gorilla beringei (Mountain gorilla).